Consider the following 498-residue polypeptide: Pentatricopeptide repeat-containing protein At2g15980 (498 aa).

PPR repeat units follow at residues 244–274, 280–314, 315–349, 350–384, 385–423, 424–458, and 459–489; these read NATTFNSMMVSFYREGETEMVERIWREMEEE, NVYSYNVLMEAYCARGLMSEAEKVWEEMKVRGVVY, DIVAYNTMIGGLCSNFEVVKAKELFRDMGLKGIEC, TCLTYEHLVNGYCKAGDVDSGLVVYREMKRKGFEA, DGLTIEALVEGLCDDRDGQRVVEAADIVKDAVREAMFYP, SRNCYELLVKRLCEDGKMDRALNIQAEMVGKGFKP, and SQETYRAFIDGYGIVGDEETSALLAIEMAES.

Belongs to the PPR family. P subfamily.

The polypeptide is Pentatricopeptide repeat-containing protein At2g15980 (Arabidopsis thaliana (Mouse-ear cress)).